Reading from the N-terminus, the 463-residue chain is Elongation factor 1-alpha (463 aa).

The tr-type G domain maps to 5–242; that stretch reads KTHINIVVIG…DAILPPARPT (238 aa). The tract at residues 14–21 is G1; sequence GHVDSGKS. A GTP-binding site is contributed by 14 to 21; the sequence is GHVDSGKS. Residues 70–74 form a G2 region; the sequence is GITID. The G3 stretch occupies residues 91–94; the sequence is DAPG. GTP contacts are provided by residues 91 to 95 and 153 to 156; these read DAPGH and NKMD. Residues 153–156 form a G4 region; it reads NKMD. The G5 stretch occupies residues 194 to 196; sequence SGW. 5-glutamyl glycerylphosphorylethanolamine is present on residues E301 and E374.

This sequence belongs to the TRAFAC class translation factor GTPase superfamily. Classic translation factor GTPase family. EF-Tu/EF-1A subfamily.

It is found in the cytoplasm. Its function is as follows. This protein promotes the GTP-dependent binding of aminoacyl-tRNA to the A-site of ribosomes during protein biosynthesis. This chain is Elongation factor 1-alpha, found in Bombyx mori (Silk moth).